A 545-amino-acid chain; its full sequence is Glucose-6-phosphate isomerase (545 aa).

Glu351 acts as the Proton donor in catalysis. Residues His382 and Lys510 contribute to the active site.

This sequence belongs to the GPI family.

The protein resides in the cytoplasm. It carries out the reaction alpha-D-glucose 6-phosphate = beta-D-fructose 6-phosphate. Its pathway is carbohydrate biosynthesis; gluconeogenesis. The protein operates within carbohydrate degradation; glycolysis; D-glyceraldehyde 3-phosphate and glycerone phosphate from D-glucose: step 2/4. Functionally, catalyzes the reversible isomerization of glucose-6-phosphate to fructose-6-phosphate. This is Glucose-6-phosphate isomerase from Shewanella woodyi (strain ATCC 51908 / MS32).